A 252-amino-acid polypeptide reads, in one-letter code: Cell division protein ZapD (252 aa).

Belongs to the ZapD family. In terms of assembly, interacts with FtsZ.

The protein localises to the cytoplasm. Cell division factor that enhances FtsZ-ring assembly. Directly interacts with FtsZ and promotes bundling of FtsZ protofilaments, with a reduction in FtsZ GTPase activity. The protein is Cell division protein ZapD of Cupriavidus metallidurans (strain ATCC 43123 / DSM 2839 / NBRC 102507 / CH34) (Ralstonia metallidurans).